Consider the following 215-residue polypeptide: Cytochrome b6 (215 aa).

Residues 32 to 52 form a helical membrane-spanning segment; it reads IFYCLGGITLTCFLVQVATGF. Cys-35 provides a ligand contact to heme c. Heme b contacts are provided by His-86 and His-100. Transmembrane regions (helical) follow at residues 90 to 110, 116 to 136, and 186 to 206; these read ASMMVLMMILHVFRVYLTGGF, LTWVTGVILAVLTVSFGVTGY, and LHTFVSPLLTAVFMLMHFLMI. Heme b contacts are provided by His-187 and His-202.

Belongs to the cytochrome b family. PetB subfamily. The 4 large subunits of the cytochrome b6-f complex are cytochrome b6, subunit IV (17 kDa polypeptide, PetD), cytochrome f and the Rieske protein, while the 4 small subunits are PetG, PetL, PetM and PetN. The complex functions as a dimer. The cofactor is heme b. Heme c serves as cofactor.

Its subcellular location is the plastid. The protein resides in the chloroplast thylakoid membrane. Component of the cytochrome b6-f complex, which mediates electron transfer between photosystem II (PSII) and photosystem I (PSI), cyclic electron flow around PSI, and state transitions. In Huperzia lucidula (Shining clubmoss), this protein is Cytochrome b6.